The following is a 32-amino-acid chain: Variegin (32 aa).

The segment at 1–32 (SDQGDVAEPKMHKTAPPFDFEAIPEEYLDDES) is disordered. The tract at residues 8–14 (EPKMHKT) is contains the active site. Threonine 14 carries an O-linked (Hex) threonine glycan. Positions 22–32 (AIPEEYLDDES) are enriched in acidic residues.

As to quaternary structure, interacts with human F2 (thrombin); the interaction results in thrombin inhibition.

It is found in the secreted. Thrombin inhibitor. Does not inhibit other serine proteases. This Amblyomma variegatum (Tropical bont tick) protein is Variegin.